Consider the following 429-residue polypeptide: Bifunctional protein GlmU (429 aa).

A pyrophosphorylase region spans residues 1–223 (MKTSILILAA…EDEFMGINDK (223 aa)). UDP-N-acetyl-alpha-D-glucosamine is bound by residues 8–11 (LAAG), K22, and 81–82 (GT). D102 is a binding site for Mg(2+). Residues G135, E149, N164, and N221 each contribute to the UDP-N-acetyl-alpha-D-glucosamine site. N221 contacts Mg(2+). The interval 224-244 (FELSIAENFMQEKIKKYWMQQ) is linker. The tract at residues 245–429 (GVIFHLPQST…KDYYYKKFQK (185 aa)) is N-acetyltransferase. Residues R308 and K325 each contribute to the UDP-N-acetyl-alpha-D-glucosamine site. H336 serves as the catalytic Proton acceptor. UDP-N-acetyl-alpha-D-glucosamine-binding residues include Y339 and N350. Acetyl-CoA is bound by residues 359 to 360 (NY), S378, A396, and R413.

The protein in the N-terminal section; belongs to the N-acetylglucosamine-1-phosphate uridyltransferase family. In the C-terminal section; belongs to the transferase hexapeptide repeat family. Homotrimer. The cofactor is Mg(2+).

It is found in the cytoplasm. It carries out the reaction alpha-D-glucosamine 1-phosphate + acetyl-CoA = N-acetyl-alpha-D-glucosamine 1-phosphate + CoA + H(+). It catalyses the reaction N-acetyl-alpha-D-glucosamine 1-phosphate + UTP + H(+) = UDP-N-acetyl-alpha-D-glucosamine + diphosphate. The protein operates within nucleotide-sugar biosynthesis; UDP-N-acetyl-alpha-D-glucosamine biosynthesis; N-acetyl-alpha-D-glucosamine 1-phosphate from alpha-D-glucosamine 6-phosphate (route II): step 2/2. It participates in nucleotide-sugar biosynthesis; UDP-N-acetyl-alpha-D-glucosamine biosynthesis; UDP-N-acetyl-alpha-D-glucosamine from N-acetyl-alpha-D-glucosamine 1-phosphate: step 1/1. Its pathway is bacterial outer membrane biogenesis; LPS lipid A biosynthesis. Functionally, catalyzes the last two sequential reactions in the de novo biosynthetic pathway for UDP-N-acetylglucosamine (UDP-GlcNAc). The C-terminal domain catalyzes the transfer of acetyl group from acetyl coenzyme A to glucosamine-1-phosphate (GlcN-1-P) to produce N-acetylglucosamine-1-phosphate (GlcNAc-1-P), which is converted into UDP-GlcNAc by the transfer of uridine 5-monophosphate (from uridine 5-triphosphate), a reaction catalyzed by the N-terminal domain. In Campylobacter jejuni subsp. jejuni serotype O:6 (strain 81116 / NCTC 11828), this protein is Bifunctional protein GlmU.